Reading from the N-terminus, the 353-residue chain is Putative 3-oxoacyl-[acyl-carrier-protein] synthase 3 (353 aa).

Active-site residues include C122, H268, and N299.

This sequence belongs to the thiolase-like superfamily. FabH family. Homodimer.

The protein localises to the cytoplasm. The enzyme catalyses malonyl-[ACP] + acetyl-CoA + H(+) = 3-oxobutanoyl-[ACP] + CO2 + CoA. It functions in the pathway lipid metabolism; fatty acid biosynthesis. Its function is as follows. May catalyze the condensation reaction of fatty acid synthesis by the addition to an acyl acceptor of two carbons from malonyl-ACP. This Campylobacter jejuni subsp. jejuni serotype O:2 (strain ATCC 700819 / NCTC 11168) protein is Putative 3-oxoacyl-[acyl-carrier-protein] synthase 3.